Here is a 448-residue protein sequence, read N- to C-terminus: Cysteine--tRNA ligase (448 aa).

A Zn(2+)-binding site is contributed by Cys-27. Positions 29-39 (PTVYNYIHVGN) match the 'HIGH' region motif. Zn(2+) contacts are provided by Cys-210, His-235, and Glu-239. The 'KMSKS' region signature appears at 267 to 271 (KMSKS). Residue Lys-270 coordinates ATP.

It belongs to the class-I aminoacyl-tRNA synthetase family. Monomer. The cofactor is Zn(2+).

The protein resides in the cytoplasm. It catalyses the reaction tRNA(Cys) + L-cysteine + ATP = L-cysteinyl-tRNA(Cys) + AMP + diphosphate. The polypeptide is Cysteine--tRNA ligase (Lactococcus lactis subsp. lactis (strain IL1403) (Streptococcus lactis)).